The primary structure comprises 292 residues: Probable 2-(5''-triphosphoribosyl)-3'-dephosphocoenzyme-A synthase (292 aa).

The protein belongs to the CitG/MdcB family.

The enzyme catalyses 3'-dephospho-CoA + ATP = 2'-(5''-triphospho-alpha-D-ribosyl)-3'-dephospho-CoA + adenine. This Shigella flexneri serotype 5b (strain 8401) protein is Probable 2-(5''-triphosphoribosyl)-3'-dephosphocoenzyme-A synthase.